The following is a 669-amino-acid chain: DNA ligase (669 aa).

NAD(+) is bound by residues 34-38 (DAEYD), 83-84 (SL), and Glu114. Lys116 (N6-AMP-lysine intermediate) is an active-site residue. Residues Arg137, Glu171, Lys287, and Lys311 each contribute to the NAD(+) site. Zn(2+) contacts are provided by Cys405, Cys408, Cys423, and Cys428. Residues 591–669 (NVESYFAGKT…EERFLQELNK (79 aa)) enclose the BRCT domain.

Belongs to the NAD-dependent DNA ligase family. LigA subfamily. It depends on Mg(2+) as a cofactor. Requires Mn(2+) as cofactor.

The enzyme catalyses NAD(+) + (deoxyribonucleotide)n-3'-hydroxyl + 5'-phospho-(deoxyribonucleotide)m = (deoxyribonucleotide)n+m + AMP + beta-nicotinamide D-nucleotide.. DNA ligase that catalyzes the formation of phosphodiester linkages between 5'-phosphoryl and 3'-hydroxyl groups in double-stranded DNA using NAD as a coenzyme and as the energy source for the reaction. It is essential for DNA replication and repair of damaged DNA. This is DNA ligase from Bacillus cereus (strain ZK / E33L).